The following is a 637-amino-acid chain: Biosynthetic arginine decarboxylase (637 aa).

At lysine 110 the chain carries N6-(pyridoxal phosphate)lysine. Position 290-300 (290-300 (IDVGGGLGVDY)) interacts with substrate.

This sequence belongs to the Orn/Lys/Arg decarboxylase class-II family. SpeA subfamily. Mg(2+) serves as cofactor. Requires pyridoxal 5'-phosphate as cofactor.

It carries out the reaction L-arginine + H(+) = agmatine + CO2. In terms of biological role, catalyzes the biosynthesis of agmatine from arginine. This is Biosynthetic arginine decarboxylase from Pseudomonas putida (strain ATCC 47054 / DSM 6125 / CFBP 8728 / NCIMB 11950 / KT2440).